Reading from the N-terminus, the 342-residue chain is Ribosomal RNA small subunit methyltransferase C (342 aa).

Belongs to the methyltransferase superfamily. RsmC family. In terms of assembly, monomer.

The protein resides in the cytoplasm. It carries out the reaction guanosine(1207) in 16S rRNA + S-adenosyl-L-methionine = N(2)-methylguanosine(1207) in 16S rRNA + S-adenosyl-L-homocysteine + H(+). Functionally, specifically methylates the guanine in position 1207 of 16S rRNA in the 30S particle. The protein is Ribosomal RNA small subunit methyltransferase C of Salmonella typhi.